Reading from the N-terminus, the 348-residue chain is Alcohol dehydrogenase 1 (348 aa).

The Zn(2+) site is built by C44, H67, C98, C101, C104, C112, and C154. NAD(+)-binding positions include 178-184 (GACGGLG), D202, K207, 269-271 (VGL), and R341.

It belongs to the zinc-containing alcohol dehydrogenase family. As to quaternary structure, homotetramer. Zn(2+) is required as a cofactor.

The protein resides in the cytoplasm. The catalysed reaction is a primary alcohol + NAD(+) = an aldehyde + NADH + H(+). The enzyme catalyses a secondary alcohol + NAD(+) = a ketone + NADH + H(+). The polypeptide is Alcohol dehydrogenase 1 (ADH1) (Kluyveromyces marxianus (Yeast)).